Consider the following 306-residue polypeptide: Ornithine carbamoyltransferase (306 aa).

Carbamoyl phosphate-binding positions include 54 to 57, Gln-81, Arg-105, and 132 to 135; these read STRT and HPLQ. L-ornithine-binding positions include Asn-162, Asp-226, and 230–231; that span reads SM. Carbamoyl phosphate-binding positions include 266-267 and Arg-294; that span reads CL.

The protein belongs to the aspartate/ornithine carbamoyltransferase superfamily. OTCase family.

The protein resides in the cytoplasm. The enzyme catalyses carbamoyl phosphate + L-ornithine = L-citrulline + phosphate + H(+). It participates in amino-acid biosynthesis; L-arginine biosynthesis; L-arginine from L-ornithine and carbamoyl phosphate: step 1/3. Functionally, reversibly catalyzes the transfer of the carbamoyl group from carbamoyl phosphate (CP) to the N(epsilon) atom of ornithine (ORN) to produce L-citrulline. This is Ornithine carbamoyltransferase from Sulfurisphaera tokodaii (strain DSM 16993 / JCM 10545 / NBRC 100140 / 7) (Sulfolobus tokodaii).